A 321-amino-acid chain; its full sequence is GTP 3',8-cyclase (321 aa).

The Radical SAM core domain maps to 5–233; it reads SFNRVIDYIR…QGSSKIYTLE (229 aa). Position 14 (arginine 14) interacts with GTP. 2 residues coordinate [4Fe-4S] cluster: cysteine 21 and cysteine 25. An S-adenosyl-L-methionine-binding site is contributed by tyrosine 27. Residue cysteine 28 participates in [4Fe-4S] cluster binding. Arginine 64 is a GTP binding site. S-adenosyl-L-methionine is bound at residue glycine 68. Serine 95 is a GTP binding site. Residue serine 119 participates in S-adenosyl-L-methionine binding. Lysine 155 contributes to the GTP binding site. Methionine 189 contributes to the S-adenosyl-L-methionine binding site. Cysteine 249 and cysteine 252 together coordinate [4Fe-4S] cluster. 254–256 provides a ligand contact to GTP; sequence RIR. [4Fe-4S] cluster is bound at residue cysteine 266.

Belongs to the radical SAM superfamily. MoaA family. As to quaternary structure, monomer and homodimer. It depends on [4Fe-4S] cluster as a cofactor.

The enzyme catalyses GTP + AH2 + S-adenosyl-L-methionine = (8S)-3',8-cyclo-7,8-dihydroguanosine 5'-triphosphate + 5'-deoxyadenosine + L-methionine + A + H(+). Its pathway is cofactor biosynthesis; molybdopterin biosynthesis. In terms of biological role, catalyzes the cyclization of GTP to (8S)-3',8-cyclo-7,8-dihydroguanosine 5'-triphosphate. The sequence is that of GTP 3',8-cyclase from Helicobacter pylori (strain HPAG1).